We begin with the raw amino-acid sequence, 703 residues long: DnaJ homolog subfamily C member 14 (703 aa).

Over residues 1–11 the composition is skewed to basic and acidic residues; sequence MAQKHPGERRL. A disordered region spans residues 1 to 229; sequence MAQKHPGERR…GRHRLARKRS (229 aa). Residues 17-28 show a composition bias toward low complexity; that stretch reads SGGTSLSTSGSS. Residues 75-84 are compositionally biased toward pro residues; that stretch reads HGPPRGPGPP. Residues 91 to 102 show a composition bias toward acidic residues; that stretch reads DESETGSEESGV. A compositionally biased stretch (polar residues) spans 121–133; that stretch reads SFLSIPSACNCQG. Residues 163 to 176 show a composition bias toward acidic residues; the sequence is GEDEELEEEYDDEE. Residues 193–202 are compositionally biased toward basic residues; it reads PLSRRQKHRF. A compositionally biased stretch (basic and acidic residues) spans 203 to 218; it reads LIKEDVRDSGRREPKA. Residues 219 to 228 are compositionally biased toward basic residues; that stretch reads PGRHRLARKR. A run of 2 helical transmembrane segments spans residues 305 to 325 and 327 to 347; these read MMFQ…IRIL and VVGA…QLGW. Positions 444–508 constitute a J domain; that stretch reads NPFHVLGVEA…ERRKEYEMKR (65 aa). Disordered regions lie at residues 622–643 and 659–703; these read FGSR…PPAD and MSNG…PFQR. Over residues 673 to 684 the composition is skewed to polar residues; sequence GTTSTSRPNSSV. The segment covering 691-703 has biased composition (basic residues); sequence PKRRKKVRRPFQR.

In terms of assembly, interacts with the FxxxFxxxF motif of DRD1 via its C-terminal domain.

The protein resides in the endoplasmic reticulum membrane. Regulates the export of target proteins, such as DRD1, from the endoplasmic reticulum to the cell surface. The protein is DnaJ homolog subfamily C member 14 (Dnajc14) of Mus musculus (Mouse).